Consider the following 520-residue polypeptide: Transactivator/viroplasmin protein (520 aa).

Disordered stretches follow at residues 103–126 and 487–520; these read SDFLRPHQGIPIPPKPEPSSSVAP and EDASADSGPKDGPPPTRSIVEKEDVPTTSSKQVD.

The protein belongs to the caulimoviridae viroplasmin family.

The protein resides in the host cytoplasm. In terms of biological role, enhances the ribosomal termination-reinitiation event leading to the translation of major open reading frames on the polycistronic viral RNAs. This is Transactivator/viroplasmin protein from Arabidopsis thaliana (Mouse-ear cress).